Here is a 357-residue protein sequence, read N- to C-terminus: Dehydrogenase FUB6 (357 aa).

Residues 1-17 (MGGEVSNKTWVFKQSPS) are compositionally biased toward polar residues. The interval 1 to 22 (MGGEVSNKTWVFKQSPSGLPEP) is disordered.

The protein belongs to the zinc-containing alcohol dehydrogenase family. Quinone oxidoreductase subfamily.

Its pathway is mycotoxin biosynthesis. Functionally, dehydrogenase; part of the gene cluster that mediates the biosynthesis of fusaric acid, a mycotoxin with low to moderate toxicity to animals and humans, but with high phytotoxic properties. L-aspartate is suggested as fusaric acid amino acid precursor that is activated and further processed to O-acetyl-L-homoserine by cluster enzymes aspartate kinase FUB3 and homoserine O-acetyltransferase FUB5, as well as enzymes of the primary metabolism. The polyketide synthase (PKS) FUB1 generates the triketide trans-2-hexenal which is presumptively released by the hydrolase FUB4 and linked to the NRPS-bound amino acid precursor by NAD(P)-dependent dehydrogenase FUB6. FUB1, FUB4, and the non-canonical NRPS Fub8 may form an enzyme complex. Further processing of the NRPS-bound intermediate might be carried out by FUB6 and the O-acetylhomoserine FUB7, enabling a spontaneous electrocyclization to close the carbon backbone of fusaric acid. Dihydrofusaric acid is likely to be released via reduction by the thioester reductase (TR) domain of FUB8 whereupon the final oxidation to fusaric acid may (also) be performed by the FMN-dependent dehydrogenase FUB9. This chain is Dehydrogenase FUB6, found in Fusarium oxysporum f. sp. lycopersici (strain 4287 / CBS 123668 / FGSC 9935 / NRRL 34936) (Fusarium vascular wilt of tomato).